Reading from the N-terminus, the 244-residue chain is 1-(5-phosphoribosyl)-5-[(5-phosphoribosylamino)methylideneamino] imidazole-4-carboxamide isomerase (244 aa).

Catalysis depends on Asp-8, which acts as the Proton acceptor. The active-site Proton donor is Asp-129.

This sequence belongs to the HisA/HisF family.

It is found in the cytoplasm. The catalysed reaction is 1-(5-phospho-beta-D-ribosyl)-5-[(5-phospho-beta-D-ribosylamino)methylideneamino]imidazole-4-carboxamide = 5-[(5-phospho-1-deoxy-D-ribulos-1-ylimino)methylamino]-1-(5-phospho-beta-D-ribosyl)imidazole-4-carboxamide. It participates in amino-acid biosynthesis; L-histidine biosynthesis; L-histidine from 5-phospho-alpha-D-ribose 1-diphosphate: step 4/9. The sequence is that of 1-(5-phosphoribosyl)-5-[(5-phosphoribosylamino)methylideneamino] imidazole-4-carboxamide isomerase from Chelativorans sp. (strain BNC1).